Consider the following 120-residue polypeptide: Large ribosomal subunit protein uL22 (120 aa).

Positions 1 to 25 (MFVNKKYTAKGKNLPSSPKKVRPIA) are disordered.

The protein belongs to the universal ribosomal protein uL22 family. Part of the 50S ribosomal subunit.

In terms of biological role, this protein binds specifically to 23S rRNA; its binding is stimulated by other ribosomal proteins, e.g. L4, L17, and L20. It is important during the early stages of 50S assembly. It makes multiple contacts with different domains of the 23S rRNA in the assembled 50S subunit and ribosome. Its function is as follows. The globular domain of the protein is located near the polypeptide exit tunnel on the outside of the subunit, while an extended beta-hairpin is found that lines the wall of the exit tunnel in the center of the 70S ribosome. The polypeptide is Large ribosomal subunit protein uL22 (Borrelia duttonii (strain Ly)).